The sequence spans 521 residues: Probable cytochrome P450 12d1 proximal, mitochondrial (521 aa).

A mitochondrion-targeting transit peptide spans 1–19 (MNTLSSARSVAIYVGPVRS). Position 467 (Cys-467) interacts with heme.

The protein belongs to the cytochrome P450 family. It depends on heme as a cofactor.

It localises to the mitochondrion membrane. This chain is Probable cytochrome P450 12d1 proximal, mitochondrial (Cyp12d1-p), found in Drosophila melanogaster (Fruit fly).